Reading from the N-terminus, the 417-residue chain is Probable serpin E3 (417 aa).

An N-terminal signal peptide occupies residues 1-24 (MPQLSASSLFICLWLVDLCHVANS). 5 N-linked (GlcNAc...) asparagine glycosylation sites follow: asparagine 50, asparagine 106, asparagine 140, asparagine 147, and asparagine 152.

The protein belongs to the serpin family.

The protein localises to the secreted. In terms of biological role, probable serine protease inhibitor. The sequence is that of Probable serpin E3 (serpine3) from Danio rerio (Zebrafish).